We begin with the raw amino-acid sequence, 345 residues long: OVARIAN TUMOR DOMAIN-containing deubiquitinating enzyme 9 (345 aa).

The OTU domain occupies 204 to 328; the sequence is LVENKIEGDG…EVHYNSIYPE (125 aa). D212 is a catalytic residue. C215 functions as the Nucleophile in the catalytic mechanism. H321 is a catalytic residue.

Belongs to the peptidase C85 family.

The catalysed reaction is Thiol-dependent hydrolysis of ester, thioester, amide, peptide and isopeptide bonds formed by the C-terminal Gly of ubiquitin (a 76-residue protein attached to proteins as an intracellular targeting signal).. Hydrolase that can remove conjugated ubiquitin from proteins in vitro and may therefore play an important regulatory role at the level of protein turnover by preventing degradation. Cysteine protease with a preference for 'Lys-63' and 'Lys-48' -linked ubiquitin (UB) tetramers as substrates. Also cleaves RUB-GST fusion. In Arabidopsis thaliana (Mouse-ear cress), this protein is OVARIAN TUMOR DOMAIN-containing deubiquitinating enzyme 9.